Reading from the N-terminus, the 114-residue chain is Cyclin-dependent kinase 2-associated protein 1 (114 aa).

Positions 18–57 (AGSVHSPSTSMATSSQYRQLLSDYGPPSLGYTQGTGNSQV) are disordered. Residues 19–24 (GSVHSP) form an interaction with CDK2AP2 region. Positions 20 to 36 (SVHSPSTSMATSSQYRQ) are enriched in polar residues. A Phosphoserine; by IKKE modification is found at Ser45. A compositionally biased stretch (polar residues) spans 47-57 (GYTQGTGNSQV).

It belongs to the CDK2AP family. In terms of assembly, homodimer. Component of the nucleosome remodeling and deacetylase (NuRD) repressor complex, composed of core proteins MTA1, MTA2, MTA3, RBBP4, RBBP7, HDAC1, HDAC2, MBD2, MBD3, and peripherally associated proteins CDK2AP1, CDK2AP2, GATAD2A, GATAD2B, CHD3, CHD4 and CHD5. The exact stoichiometry of the NuRD complex is unknown, and some subunits such as MBD2 and MBD3, GATAD2A and GATAD2B, and CHD3, CHD4 and CHD5 define mutually exclusive NuRD complexes. Interacts with monomeric unphosphorylated CDK2. Interacts with CDK2AP2. Interacts with GATAD2A. Interacts with HDAC1. Interacts with HDAC2. Interacts with MBD2. Interacts with MBD3. Interacts with RBBP4. Interacts with RBBP7. In terms of processing, phosphorylated in vitro by IKBKE at Ser-45.

It localises to the nucleus. The protein resides in the chromosome. In terms of biological role, inhibitor of cyclin-dependent kinase CDK2. Also acts as a component of the histone deacetylase NuRD complex which participates in the remodeling of chromatin. The sequence is that of Cyclin-dependent kinase 2-associated protein 1 (Cdk2ap1) from Mus musculus (Mouse).